We begin with the raw amino-acid sequence, 307 residues long: Porphobilinogen deaminase (307 aa).

Residue C241 is modified to S-(dipyrrolylmethanemethyl)cysteine.

It belongs to the HMBS family. In terms of assembly, monomer. Dipyrromethane serves as cofactor.

It catalyses the reaction 4 porphobilinogen + H2O = hydroxymethylbilane + 4 NH4(+). It functions in the pathway porphyrin-containing compound metabolism; protoporphyrin-IX biosynthesis; coproporphyrinogen-III from 5-aminolevulinate: step 2/4. Its function is as follows. Tetrapolymerization of the monopyrrole PBG into the hydroxymethylbilane pre-uroporphyrinogen in several discrete steps. This Coxiella burnetii (strain CbuG_Q212) (Coxiella burnetii (strain Q212)) protein is Porphobilinogen deaminase.